The sequence spans 304 residues: GTPase Era (304 aa).

Residues 7–178 (KCGVVAVLGA…KNALAALMPE (172 aa)) enclose the Era-type G domain. The interval 15-22 (GAPNAGKS) is G1. GTP is bound at residue 15–22 (GAPNAGKS). The interval 41 to 45 (QTTRA) is G2. Residues 66–69 (DTPG) are G3. Residues 66–70 (DTPGI) and 128–131 (NKVD) contribute to the GTP site. The tract at residues 128-131 (NKVD) is G4. Residues 157 to 159 (VSA) are G5. The KH type-2 domain occupies 209-286 (LHEELPYDSA…HLFLHVKVDE (78 aa)).

Belongs to the TRAFAC class TrmE-Era-EngA-EngB-Septin-like GTPase superfamily. Era GTPase family. In terms of assembly, monomer.

Its subcellular location is the cytoplasm. It localises to the cell inner membrane. An essential GTPase that binds both GDP and GTP, with rapid nucleotide exchange. Plays a role in 16S rRNA processing and 30S ribosomal subunit biogenesis and possibly also in cell cycle regulation and energy metabolism. The sequence is that of GTPase Era from Erythrobacter litoralis (strain HTCC2594).